The chain runs to 276 residues: Diaminopimelate epimerase (276 aa).

Residues asparagine 13, glutamine 46, and asparagine 66 each coordinate substrate. The Proton donor role is filled by cysteine 75. Substrate is bound by residues glycine 76 to asparagine 77, asparagine 159, asparagine 192, and glutamate 210 to arginine 211. The Proton acceptor role is filled by cysteine 219. Glycine 220–threonine 221 lines the substrate pocket.

Belongs to the diaminopimelate epimerase family. Homodimer.

The protein localises to the cytoplasm. It carries out the reaction (2S,6S)-2,6-diaminopimelate = meso-2,6-diaminopimelate. It participates in amino-acid biosynthesis; L-lysine biosynthesis via DAP pathway; DL-2,6-diaminopimelate from LL-2,6-diaminopimelate: step 1/1. Catalyzes the stereoinversion of LL-2,6-diaminopimelate (L,L-DAP) to meso-diaminopimelate (meso-DAP), a precursor of L-lysine and an essential component of the bacterial peptidoglycan. The chain is Diaminopimelate epimerase from Aeromonas hydrophila subsp. hydrophila (strain ATCC 7966 / DSM 30187 / BCRC 13018 / CCUG 14551 / JCM 1027 / KCTC 2358 / NCIMB 9240 / NCTC 8049).